Here is a 614-residue protein sequence, read N- to C-terminus: RNA polymerase sigma factor RpoD (614 aa).

The tract at residues 168-245 (DPDDNIAAPT…PEEKRSYPQG (78 aa)) is disordered. A compositionally biased stretch (acidic residues) spans 193-209 (EADDDEEESEGGDDEEE). A compositionally biased stretch (polar residues) spans 215-232 (TRSSQPSVSVRYPSSFSD). The tract at residues 380–450 (MVEANLRLVI…TRSIADQART (71 aa)) is sigma-70 factor domain-2. Positions 404–407 (DLIQ) match the Interaction with polymerase core subunit RpoC motif. Residues 459-535 (ETINKLNRIS…DSTMQSPIYV (77 aa)) are sigma-70 factor domain-3. The sigma-70 factor domain-4 stretch occupies residues 548-601 (VLSGLTAREAKVLRMRFGIDMNTDHTLEEVGKQFDVTRERIRQIEAKAWRKLRH). Residues 574–593 (LEEVGKQFDVTRERIRQIEA) constitute a DNA-binding region (H-T-H motif).

Belongs to the sigma-70 factor family. RpoD/SigA subfamily. As to quaternary structure, interacts transiently with the RNA polymerase catalytic core.

It is found in the cytoplasm. In terms of biological role, sigma factors are initiation factors that promote the attachment of RNA polymerase to specific initiation sites and are then released. This sigma factor is the primary sigma factor during exponential growth. The polypeptide is RNA polymerase sigma factor RpoD (Pseudomonas putida (Arthrobacter siderocapsulatus)).